The sequence spans 228 residues: Phosphoribosylformylglycinamidine synthase subunit PurQ (228 aa).

The Glutamine amidotransferase type-1 domain maps to Phe-3–Val-226. The Nucleophile role is filled by Cys-86. Catalysis depends on residues His-195 and Glu-197.

Part of the FGAM synthase complex composed of 1 PurL, 1 PurQ and 2 PurS subunits.

The protein resides in the cytoplasm. The catalysed reaction is N(2)-formyl-N(1)-(5-phospho-beta-D-ribosyl)glycinamide + L-glutamine + ATP + H2O = 2-formamido-N(1)-(5-O-phospho-beta-D-ribosyl)acetamidine + L-glutamate + ADP + phosphate + H(+). It carries out the reaction L-glutamine + H2O = L-glutamate + NH4(+). The protein operates within purine metabolism; IMP biosynthesis via de novo pathway; 5-amino-1-(5-phospho-D-ribosyl)imidazole from N(2)-formyl-N(1)-(5-phospho-D-ribosyl)glycinamide: step 1/2. Part of the phosphoribosylformylglycinamidine synthase complex involved in the purines biosynthetic pathway. Catalyzes the ATP-dependent conversion of formylglycinamide ribonucleotide (FGAR) and glutamine to yield formylglycinamidine ribonucleotide (FGAM) and glutamate. The FGAM synthase complex is composed of three subunits. PurQ produces an ammonia molecule by converting glutamine to glutamate. PurL transfers the ammonia molecule to FGAR to form FGAM in an ATP-dependent manner. PurS interacts with PurQ and PurL and is thought to assist in the transfer of the ammonia molecule from PurQ to PurL. This chain is Phosphoribosylformylglycinamidine synthase subunit PurQ, found in Geobacillus sp. (strain WCH70).